Reading from the N-terminus, the 383-residue chain is Pleckstrin homology domain-containing family A member 1 (383 aa).

PH domains lie at 7-112 and 191-289; these read QNRI…KAIK and AVIK…GAIV. Val284 is modified (phosphoserine). The tract at residues 362–383 is disordered; that stretch reads LPRSSQGTSRSRLSLQESQLPK. Over residues 370-383 the composition is skewed to low complexity; the sequence is SRSRLSLQESQLPK.

Interacts with MPDZ and PTPN13.

Its subcellular location is the cytoplasm. It is found in the cell membrane. The protein localises to the nucleus. In terms of biological role, binds specifically to phosphatidylinositol 3,4-diphosphate (PtdIns3,4P2), but not to other phosphoinositides. May recruit other proteins to the plasma membrane. In Mus musculus (Mouse), this protein is Pleckstrin homology domain-containing family A member 1 (Plekha1).